Here is a 205-residue protein sequence, read N- to C-terminus: Protein N-terminal glutamine amidohydrolase (205 aa).

Active-site residues include cysteine 20, histidine 74, and aspartate 90.

The protein belongs to the NTAQ1 family. Monomer.

The catalysed reaction is N-terminal L-glutaminyl-[protein] + H2O = N-terminal L-glutamyl-[protein] + NH4(+). Its function is as follows. Mediates the side-chain deamidation of N-terminal glutamine residues to glutamate, an important step in N-end rule pathway of protein degradation. Conversion of the resulting N-terminal glutamine to glutamate renders the protein susceptible to arginylation, polyubiquitination and degradation as specified by the N-end rule. Does not act on substrates with internal or C-terminal glutamine and does not act on non-glutamine residues in any position. This is Protein N-terminal glutamine amidohydrolase (tun) from Drosophila ananassae (Fruit fly).